The primary structure comprises 438 residues: Enolase (438 aa).

Position 174 (Q174) interacts with (2R)-2-phosphoglycerate. The active-site Proton donor is E216. Mg(2+)-binding residues include D253, E297, and D324. Residues K349, R378, S379, and K400 each contribute to the (2R)-2-phosphoglycerate site. K349 serves as the catalytic Proton acceptor.

It belongs to the enolase family. As to quaternary structure, component of the RNA degradosome, a multiprotein complex involved in RNA processing and mRNA degradation. The cofactor is Mg(2+).

It is found in the cytoplasm. The protein resides in the secreted. It localises to the cell surface. The enzyme catalyses (2R)-2-phosphoglycerate = phosphoenolpyruvate + H2O. The protein operates within carbohydrate degradation; glycolysis; pyruvate from D-glyceraldehyde 3-phosphate: step 4/5. Catalyzes the reversible conversion of 2-phosphoglycerate (2-PG) into phosphoenolpyruvate (PEP). It is essential for the degradation of carbohydrates via glycolysis. The chain is Enolase from Psychrobacter arcticus (strain DSM 17307 / VKM B-2377 / 273-4).